We begin with the raw amino-acid sequence, 449 residues long: Malonyl-CoA:anthocyanidin 5-O-glucoside-6''-O-malonyltransferase (449 aa).

M1 carries the post-translational modification N-acetylmethionine. Active-site proton acceptor residues include H162 and D394.

This sequence belongs to the plant acyltransferase family. In terms of tissue distribution, expressed in flowers. Detected in leaves, stems, roots and siliques.

The catalysed reaction is anthocyanin A3 + malonyl-CoA = anthocyanin A5 + CoA. It catalyses the reaction anthocyanin A7 + malonyl-CoA = anthocyanin A9 + CoA. The enzyme catalyses anthocyanin A6 + malonyl-CoA = anthocyanin A8 + CoA. It carries out the reaction anthocyanin A10 + malonyl-CoA = anthocyanin A11 + CoA. In terms of biological role, catalyzes the malonylation of the 5-O-glucose residue of anthocyanins, using malonyl-CoA as the malonyl donor. Acts only on anthocyanin substrates containing a 5-O-glucosyl moiety. Acts on the four native A.thaliana anthocyanins, A3, A7, and to a lesser extent, A6 and A10. Can also use the non-native anthocyanin compounds cyanin (cyanidin 3,5-diglucoside), malvin, pelargonidin 3,5-diglucoside, peonidin 3,5-diglucoside, cyanidin 3-coumaroylglucoside 5-glucoside, delphinidin 3-coumaroylrutinoside 5-glucoside and petunidin 3-coumaroylrutinoside 5-glucoside as substrates. Is the sole enzyme responsible for producing malonylated anthocyanin 5-O-glucosides in A.thaliana. Is not able to catalyze acyl transfer using acetyl-CoA, butyryl-CoA, hexanoyl-CoA, benzoyl-CoA, cinnamoyl-CoA, methylmalonyl-CoA, succinyl-CoA, p-coumaroyl-CoA or caffeoyl-CoA. This chain is Malonyl-CoA:anthocyanidin 5-O-glucoside-6''-O-malonyltransferase (5MAT), found in Arabidopsis thaliana (Mouse-ear cress).